Here is a 131-residue protein sequence, read N- to C-terminus: Glycine cleavage system H protein (131 aa).

Residues 24–106 (RAIVGISDHA…YGEGWIMVIE (83 aa)) enclose the Lipoyl-binding domain. Position 65 is an N6-lipoyllysine (lysine 65).

This sequence belongs to the GcvH family. In terms of assembly, the glycine cleavage system is composed of four proteins: P, T, L and H. (R)-lipoate serves as cofactor.

The glycine cleavage system catalyzes the degradation of glycine. The H protein shuttles the methylamine group of glycine from the P protein to the T protein. The protein is Glycine cleavage system H protein of Xylella fastidiosa (strain M12).